A 607-amino-acid chain; its full sequence is Pyruvate decarboxylase 1 (607 aa).

Residues Asp-69 and His-156 each contribute to the substrate site. The thiamine pyrophosphate binding stretch occupies residues 434–516; that stretch reads DSWFNCQKLK…FLINNGGYTI (83 aa). The Mg(2+) site is built by Asp-484, Asn-511, and Gly-513. A substrate-binding site is contributed by Glu-517.

This sequence belongs to the TPP enzyme family. In terms of assembly, homotetramer. A metal cation serves as cofactor. It depends on thiamine diphosphate as a cofactor. Highly expressed in seeds, and at lower levels in roots and siliques.

It carries out the reaction a 2-oxocarboxylate + H(+) = an aldehyde + CO2. Its function is as follows. May play a role in ethanolic fermentation during anoxia. This Arabidopsis thaliana (Mouse-ear cress) protein is Pyruvate decarboxylase 1 (PDC1).